The following is a 136-amino-acid chain: Large ribosomal subunit protein uL16 (136 aa).

Belongs to the universal ribosomal protein uL16 family. Part of the 50S ribosomal subunit.

Binds 23S rRNA and is also seen to make contacts with the A and possibly P site tRNAs. This chain is Large ribosomal subunit protein uL16, found in Serratia proteamaculans (strain 568).